Here is a 362-residue protein sequence, read N- to C-terminus: 3-dehydroquinate synthase (362 aa).

NAD(+) contacts are provided by residues 71–76, 105–109, 129–130, Lys-142, Lys-151, and 169–172; these read DGEQYK, GVVGD, TT, and CLKT. Residues Glu-184, His-247, and His-264 each coordinate Zn(2+).

It belongs to the sugar phosphate cyclases superfamily. Dehydroquinate synthase family. It depends on NAD(+) as a cofactor. Requires Co(2+) as cofactor. The cofactor is Zn(2+).

It is found in the cytoplasm. It catalyses the reaction 7-phospho-2-dehydro-3-deoxy-D-arabino-heptonate = 3-dehydroquinate + phosphate. It functions in the pathway metabolic intermediate biosynthesis; chorismate biosynthesis; chorismate from D-erythrose 4-phosphate and phosphoenolpyruvate: step 2/7. Functionally, catalyzes the conversion of 3-deoxy-D-arabino-heptulosonate 7-phosphate (DAHP) to dehydroquinate (DHQ). This chain is 3-dehydroquinate synthase, found in Shigella flexneri.